Reading from the N-terminus, the 248-residue chain is Uracil-DNA glycosylase (248 aa).

Residue D85 is the Proton acceptor of the active site.

Belongs to the uracil-DNA glycosylase (UDG) superfamily. UNG family.

The protein localises to the cytoplasm. It carries out the reaction Hydrolyzes single-stranded DNA or mismatched double-stranded DNA and polynucleotides, releasing free uracil.. In terms of biological role, excises uracil residues from the DNA which can arise as a result of misincorporation of dUMP residues by DNA polymerase or due to deamination of cytosine. The chain is Uracil-DNA glycosylase from Deinococcus deserti (strain DSM 17065 / CIP 109153 / LMG 22923 / VCD115).